A 158-amino-acid polypeptide reads, in one-letter code: Protein Smg homolog (158 aa).

Belongs to the Smg family.

The protein is Protein Smg homolog of Coxiella burnetii (strain Dugway 5J108-111).